Consider the following 342-residue polypeptide: UDP-N-acetylenolpyruvoylglucosamine reductase (342 aa).

The 171-residue stretch at 13-183 (IDHNAQHIVC…VAVGLRLPKE (171 aa)) folds into the FAD-binding PCMH-type domain. The active site involves Arg-159. Position 190 (Tyr-190) interacts with substrate. Residue Ser-229 is the Proton donor of the active site. The active site involves Glu-325.

It belongs to the MurB family. Requires FAD as cofactor.

The protein localises to the cytoplasm. The catalysed reaction is UDP-N-acetyl-alpha-D-muramate + NADP(+) = UDP-N-acetyl-3-O-(1-carboxyvinyl)-alpha-D-glucosamine + NADPH + H(+). It functions in the pathway cell wall biogenesis; peptidoglycan biosynthesis. Functionally, cell wall formation. The chain is UDP-N-acetylenolpyruvoylglucosamine reductase from Escherichia coli O6:H1 (strain CFT073 / ATCC 700928 / UPEC).